The primary structure comprises 265 residues: Protein Pars_0096 (265 aa).

The protein belongs to the CinA family.

The protein is Protein Pars_0096 of Pyrobaculum arsenaticum (strain DSM 13514 / JCM 11321 / PZ6).